A 70-amino-acid polypeptide reads, in one-letter code: ATP synthase subunit c (70 aa).

The next 2 helical transmembrane spans lie at 4 to 24 and 47 to 67; these read IAAG…NGLV and FIGV…ALMV.

This sequence belongs to the ATPase C chain family. As to quaternary structure, F-type ATPases have 2 components, F(1) - the catalytic core - and F(0) - the membrane proton channel. F(1) has five subunits: alpha(3), beta(3), gamma(1), delta(1), epsilon(1). F(0) has three main subunits: a(1), b(2) and c(10-14). The alpha and beta chains form an alternating ring which encloses part of the gamma chain. F(1) is attached to F(0) by a central stalk formed by the gamma and epsilon chains, while a peripheral stalk is formed by the delta and b chains.

It is found in the cell membrane. Its function is as follows. F(1)F(0) ATP synthase produces ATP from ADP in the presence of a proton or sodium gradient. F-type ATPases consist of two structural domains, F(1) containing the extramembraneous catalytic core and F(0) containing the membrane proton channel, linked together by a central stalk and a peripheral stalk. During catalysis, ATP synthesis in the catalytic domain of F(1) is coupled via a rotary mechanism of the central stalk subunits to proton translocation. In terms of biological role, key component of the F(0) channel; it plays a direct role in translocation across the membrane. A homomeric c-ring of between 10-14 subunits forms the central stalk rotor element with the F(1) delta and epsilon subunits. The polypeptide is ATP synthase subunit c (Lactiplantibacillus plantarum (strain ATCC BAA-793 / NCIMB 8826 / WCFS1) (Lactobacillus plantarum)).